A 206-amino-acid polypeptide reads, in one-letter code: A-type ATP synthase subunit D (206 aa).

It belongs to the V-ATPase D subunit family. As to quaternary structure, has multiple subunits with at least A(3), B(3), C, D, E, F, H, I and proteolipid K(x).

The protein localises to the cell membrane. Its function is as follows. Component of the A-type ATP synthase that produces ATP from ADP in the presence of a proton gradient across the membrane. The protein is A-type ATP synthase subunit D of Methanococcoides burtonii (strain DSM 6242 / NBRC 107633 / OCM 468 / ACE-M).